We begin with the raw amino-acid sequence, 595 residues long: Tumor necrosis factor receptor superfamily member 8 (595 aa).

Residues 1–18 (MRVLLAALGLLFLGALRA) form the signal peptide. Residues 19–385 (FPQDRPFEDT…STGKPVLDAG (367 aa)) lie on the Extracellular side of the membrane. TNFR-Cys repeat units lie at residues 28 to 66 (TCHGNPSHYYDKAVRRCCYRCPMGLFPTQQCPQRPTDCR), 68 to 106 (QCEPDYYLDEADRCTACVTCSRDDLVEKTPCAWNSSRVC), and 107 to 150 (ECRP…TVCE). 8 cysteine pairs are disulfide-bonded: Cys-29/Cys-44, Cys-45/Cys-58, Cys-48/Cys-65, Cys-69/Cys-81, Cys-84/Cys-98, Cys-87/Cys-106, Cys-108/Cys-122, and Cys-131/Cys-149. N-linked (GlcNAc...) asparagine glycosylation is present at Asn-32. The N-linked (GlcNAc...) asparagine glycan is linked to Asn-101. The interval 167–238 (KEPSSGTIPQ…PTQPCPEGSG (72 aa)) is disordered. Residues 179-194 (PTPVSPATSSASTMPV) are compositionally biased toward low complexity. 3 TNFR-Cys repeats span residues 205-241 (ASKLTRAPDSPSSVGRPSSDPGLSPTQPCPEGSGDCR), 243-281 (QCEPDYYLDEAGRCTACVSCSRDDLVEKTPCAWNSSRTC), and 282-325 (ECRP…TTFE). Cystine bridges form between Cys-233/Cys-240, Cys-244/Cys-256, Cys-259/Cys-273, Cys-262/Cys-281, Cys-283/Cys-297, and Cys-289/Cys-300. A glycan (N-linked (GlcNAc...) asparagine) is linked at Asn-276. The segment at 323–355 (TFEAPPLGTQPDCNPTPENGEAPASTSPTQSLL) is disordered. Asn-336 carries an N-linked (GlcNAc...) asparagine glycan. A compositionally biased stretch (polar residues) spans 346–355 (ASTSPTQSLL). A helical membrane pass occupies residues 386 to 406 (PVLFWVILVLVVVVGSSAFLL). The Cytoplasmic segment spans residues 407-595 (CHRRACRKRI…DPLPTAASGK (189 aa)). Phosphoserine occurs at positions 438 and 452. Disordered regions lie at residues 438–457 (SRPRRSSTQLRSGASVTEPV), 485–509 (LQDASPAGGPSSPRDLPEPRVSTEH), and 536–595 (EGRG…ASGK). The segment covering 443-452 (SSTQLRSGAS) has biased composition (polar residues). The segment covering 499–509 (DLPEPRVSTEH) has biased composition (basic and acidic residues).

This sequence belongs to the TNFR8 family. As to quaternary structure, interacts with TRAF1, TRAF2, TRAF3 and TRAF5. Post-translationally, phosphorylated on serine and tyrosine residues. Isoform 2 is constitutively phosphorylated. Detected in alveolar macrophages (at protein level).

Its subcellular location is the cell membrane. It localises to the cytoplasm. In terms of biological role, receptor for TNFSF8/CD30L. May play a role in the regulation of cellular growth and transformation of activated lymphoblasts. Regulates gene expression through activation of NF-kappa-B. This Homo sapiens (Human) protein is Tumor necrosis factor receptor superfamily member 8.